We begin with the raw amino-acid sequence, 348 residues long: sn-glycerol-3-phosphate import ATP-binding protein UgpC 3 (348 aa).

Positions 4–234 (INIVDVKKNY…PASLFVAGFI (231 aa)) constitute an ABC transporter domain. 36–43 (GPSGCGKS) lines the ATP pocket.

This sequence belongs to the ABC transporter superfamily. sn-glycerol-3-phosphate importer (TC 3.A.1.1.3) family. As to quaternary structure, the complex is composed of two ATP-binding proteins (UgpC), two transmembrane proteins (UgpA and UgpE) and a solute-binding protein (UgpB).

It is found in the cell inner membrane. The enzyme catalyses sn-glycerol 3-phosphate(out) + ATP + H2O = sn-glycerol 3-phosphate(in) + ADP + phosphate + H(+). In terms of biological role, part of the ABC transporter complex UgpBAEC involved in sn-glycerol-3-phosphate (G3P) import. Responsible for energy coupling to the transport system. This is sn-glycerol-3-phosphate import ATP-binding protein UgpC 3 from Rhizobium etli (strain ATCC 51251 / DSM 11541 / JCM 21823 / NBRC 15573 / CFN 42).